We begin with the raw amino-acid sequence, 191 residues long: MKTGSVEAGEQASEDATPRRGKKLNRGILILDLVLRVFGAICTLGSAVAMGTTSQTLPSSSQFFRFRAKYNDLPMFMFFAIANSIVCAYLVLSLRLSIFHIIRSAGIITRIILVTFDMVMLVLLTCGASAATSIVYLAHKGNASANWLPFCVRFSHFCNRISGSLIGSFFSIIIFMLLVILSAVSQFSICN.

Over 1 to 27 (MKTGSVEAGEQASEDATPRRGKKLNRG) the chain is Cytoplasmic. Residues 28 to 48 (ILILDLVLRVFGAICTLGSAV) form a helical membrane-spanning segment. At 49–72 (AMGTTSQTLPSSSQFFRFRAKYND) the chain is on the extracellular side. A helical membrane pass occupies residues 73-93 (LPMFMFFAIANSIVCAYLVLS). Topologically, residues 94–110 (LRLSIFHIIRSAGIITR) are cytoplasmic. Residues 111–131 (IILVTFDMVMLVLLTCGASAA) traverse the membrane as a helical segment. Topologically, residues 132–160 (TSIVYLAHKGNASANWLPFCVRFSHFCNR) are extracellular. N-linked (GlcNAc...) asparagine glycosylation is present at N142. The helical transmembrane segment at 161–181 (ISGSLIGSFFSIIIFMLLVIL) threads the bilayer. The Cytoplasmic portion of the chain corresponds to 182–191 (SAVSQFSICN).

The protein belongs to the Casparian strip membrane proteins (CASP) family. In terms of assembly, homodimer and heterodimers.

The protein resides in the cell membrane. Functionally, regulates membrane-cell wall junctions and localized cell wall deposition. Required for establishment of the Casparian strip membrane domain (CSD) and the subsequent formation of Casparian strips, a cell wall modification of the root endodermis that determines an apoplastic barrier between the intraorganismal apoplasm and the extraorganismal apoplasm and prevents lateral diffusion. This chain is Casparian strip membrane protein 4, found in Ricinus communis (Castor bean).